The following is a 64-amino-acid chain: Large ribosomal subunit protein uL30 (64 aa).

Belongs to the universal ribosomal protein uL30 family. In terms of assembly, part of the 50S ribosomal subunit.

This is Large ribosomal subunit protein uL30 from Rhodopseudomonas palustris (strain BisA53).